Consider the following 150-residue polypeptide: Large ribosomal subunit protein uL15 (150 aa).

A disordered region spans residues methionine 1 to methionine 60. Positions threonine 30–lysine 39 are enriched in basic residues. The segment covering glycine 44–glycine 53 has biased composition (basic and acidic residues).

It belongs to the universal ribosomal protein uL15 family. Part of the 50S ribosomal subunit.

Binds to the 23S rRNA. The sequence is that of Large ribosomal subunit protein uL15 from Thermus thermophilus (strain ATCC BAA-163 / DSM 7039 / HB27).